The sequence spans 72 residues: MAKDDVIEVEGTVIETLPNAMFRVELENGHTVLAHVSGKIRMHFIRILPGDRVTVELSPYDLTRGRITYRYK.

The S1-like domain occupies 1–72; it reads MAKDDVIEVE…TRGRITYRYK (72 aa). A Phosphotyrosine modification is found at Tyr-60.

This sequence belongs to the IF-1 family. In terms of assembly, component of the 30S ribosomal translation pre-initiation complex which assembles on the 30S ribosome in the order IF-2 and IF-3, IF-1 and N-formylmethionyl-tRNA(fMet); mRNA recruitment can occur at any time during PIC assembly.

It is found in the cytoplasm. One of the essential components for the initiation of protein synthesis. Stabilizes the binding of IF-2 and IF-3 on the 30S subunit to which N-formylmethionyl-tRNA(fMet) subsequently binds. Helps modulate mRNA selection, yielding the 30S pre-initiation complex (PIC). Upon addition of the 50S ribosomal subunit IF-1, IF-2 and IF-3 are released leaving the mature 70S translation initiation complex. This Geobacillus kaustophilus (strain HTA426) protein is Translation initiation factor IF-1.